A 532-amino-acid chain; its full sequence is MDTTKSLLSTLIAIMIPLSLGSVSSPNLLPTPPMGFNNWARFMCDLNETLFLETASAMISTGLLEAGYNRVNLDDCWMAYDRAADSSLQWNTTKFPHGIPWLARHLKAQGFHVGIYEDAGNLTCGGYPGSFGHEALDAQTFAAWGIDYLKLDGCNVFPEHSRTLEEEYKARYAHWHSILKQMHHPLIFSESAPAYFADPANLTSWYEVMDWVPAFGELARHSTDILVYVGEGSAWDSIMVNYRYNTLLARYQRPGYINDPDFLIPDHPGLTLEEKRSQFALWASFSAPLIVSAYIPGLSSEELAILRNEELIRVDQDVLGLQATLASRGLEVDVLTRSLEGGDRLLTVLNRGDGVAVVSVPVEWMGLQRGCPYVVKNLWDGEVQVLEEEIVIRLNSHATQVYRIALPDECSTVIPTGIVFNTASGNCLTDENGERVGFEACRGSETQIWQVSELGYLRPLSRTSHCLTGGSQASVQLCTEQKNQQWAYAITGILKNEHTEMCLTEGTGISQCGFERDSQVFGLPSGVDIKPS.

Residues 1 to 21 (MDTTKSLLSTLIAIMIPLSLG) form the signal peptide. The cysteines at positions 44 and 76 are disulfide-linked. Residues Asn-47, Asn-91, and Asn-121 are each glycosylated (N-linked (GlcNAc...) asparagine). Cys-124 and Cys-154 are oxidised to a cystine. Catalysis depends on Asp-152, which acts as the Nucleophile. N-linked (GlcNAc...) asparagine glycosylation occurs at Asn-201. The active-site Proton donor is Asp-210. Positions 410–531 (CSTVIPTGIV…GLPSGVDIKP (122 aa)) constitute a Ricin B-type lectin domain. 2 disulfide bridges follow: Cys-427–Cys-441 and Cys-466–Cys-478.

Belongs to the glycosyl hydrolase 27 family.

The protein localises to the secreted. The enzyme catalyses Hydrolysis of terminal, non-reducing alpha-D-galactose residues in alpha-D-galactosides, including galactose oligosaccharides, galactomannans and galactolipids.. Its function is as follows. Hydrolyzes a variety of simple alpha-D-galactoside as well as more complex molecules such as oligosaccharides and polysaccharides. The sequence is that of Probable alpha-galactosidase A (aglA) from Aspergillus fumigatus (strain ATCC MYA-4609 / CBS 101355 / FGSC A1100 / Af293) (Neosartorya fumigata).